The primary structure comprises 262 residues: MTERENNVYKAKLAEQAERYDEMVEAMKKVASMDVELTVEERNLLSVAYKNVIGARRASWRIITSIEQKEENKGAEEKLEMIKTYRGQVEKELRDICSDILNVLEKHLIPCATSGESKVFYYKMKGDYHRYLAEFATGSDRKDAAENSLIAYKAASDIAMNDLPPTHPIRLGLALNFSVFYYEILNSPDRACRLAKAAFDDAIAELDTLSEESYKDSTLIMQLLRDNLTLWTSDMQAEEVDPNAGDGEPKEQIQDVEDQDVS.

The segment at 236–262 (QAEEVDPNAGDGEPKEQIQDVEDQDVS) is disordered. Ser262 is subject to Phosphoserine.

It belongs to the 14-3-3 family. As to quaternary structure, homodimer. Interacts with phosphorylated yki. Interacts with pav (when serine phosphorylated); the interaction is necessary for association of the complex pav-14-3-3epsilon complex to the microtubules, thereby inhibiting microtubule sliding.

In terms of biological role, positively regulates Ras-mediated pathways. Acts downstream or parallel to Raf, but upstream of nuclear factors in Ras signaling. Three mutants have been isolated, that suppress the rough eye phenotype caused by mutated Ras1 (sev-Ras1 v12). Inhibits yki activity by restricting its nuclear localization. Together with pav, has a role in the inhibition of microtubule sliding during neurite outgrowth. This is 14-3-3 protein epsilon (14-3-3epsilon) from Drosophila melanogaster (Fruit fly).